The following is a 186-amino-acid chain: UPF0461 protein C5orf24 homolog (186 aa).

Residues 60-69 are compositionally biased toward polar residues; the sequence is NETHLQTSTS. The segment at 60-140 is disordered; that stretch reads NETHLQTSTS…AAGYKVSPGR (81 aa). Positions 78–92 are enriched in basic residues; the sequence is LKKKKNLGRSGKRGR. The segment covering 94–107 has biased composition (polar residues); the sequence is SGTTKSAGYRTSTG.

Belongs to the UPF0461 family.

The chain is UPF0461 protein C5orf24 homolog from Xenopus tropicalis (Western clawed frog).